Here is a 181-residue protein sequence, read N- to C-terminus: Large ribosomal subunit protein uL5c (181 aa).

The protein belongs to the universal ribosomal protein uL5 family. As to quaternary structure, part of the 50S ribosomal subunit; contacts the 5S rRNA.

The protein localises to the plastid. Its subcellular location is the cyanelle. Binds 5S rRNA, forms part of the central protuberance of the 50S subunit. In Cyanophora paradoxa, this protein is Large ribosomal subunit protein uL5c (rpl5).